A 494-amino-acid polypeptide reads, in one-letter code: Probable cytosol aminopeptidase (494 aa).

Residues Lys-260 and Asp-265 each coordinate Mn(2+). Lys-272 is an active-site residue. Asp-283, Asp-342, and Glu-344 together coordinate Mn(2+). Residue Arg-346 is part of the active site.

It belongs to the peptidase M17 family. Mn(2+) serves as cofactor.

Its subcellular location is the cytoplasm. The catalysed reaction is Release of an N-terminal amino acid, Xaa-|-Yaa-, in which Xaa is preferably Leu, but may be other amino acids including Pro although not Arg or Lys, and Yaa may be Pro. Amino acid amides and methyl esters are also readily hydrolyzed, but rates on arylamides are exceedingly low.. The enzyme catalyses Release of an N-terminal amino acid, preferentially leucine, but not glutamic or aspartic acids.. In terms of biological role, presumably involved in the processing and regular turnover of intracellular proteins. Catalyzes the removal of unsubstituted N-terminal amino acids from various peptides. This chain is Probable cytosol aminopeptidase, found in Bacillus thuringiensis (strain Al Hakam).